We begin with the raw amino-acid sequence, 80 residues long: Antitoxin VapB15 (80 aa).

Residues 60–80 form a disordered region; it reads DFSNDEIESFSDTDRKLADES. Glu-67 contacts Mg(2+). Glu-67 serves as a coordination point for Mn(2+). Residues 71–80 are compositionally biased toward basic and acidic residues; that stretch reads DTDRKLADES.

Forms a VapB15-VapC15(2) heterotrimer and a VapB15(2)-VapC15(2) heterotetramer; each toxin pair forms a homodimer which creates a channel in which the antitoxin binds. Mg(2+) is required as a cofactor. Requires Mn(2+) as cofactor.

Functionally, antitoxin component of a type II toxin-antitoxin (TA) system. Neutralizes the toxic effect of cognate toxin VapC15. The protein is Antitoxin VapB15 (vapB15) of Mycobacterium tuberculosis (strain CDC 1551 / Oshkosh).